The following is a 368-amino-acid chain: Phosphate acyltransferase (368 aa).

The segment at 334-368 is disordered; the sequence is AAPLGESGRDANGAGQASPSAGQPAEPSAALSSKT.

This sequence belongs to the PlsX family. In terms of assembly, homodimer. Probably interacts with PlsY.

It is found in the cytoplasm. It catalyses the reaction a fatty acyl-[ACP] + phosphate = an acyl phosphate + holo-[ACP]. It participates in lipid metabolism; phospholipid metabolism. Catalyzes the reversible formation of acyl-phosphate (acyl-PO(4)) from acyl-[acyl-carrier-protein] (acyl-ACP). This enzyme utilizes acyl-ACP as fatty acyl donor, but not acyl-CoA. This Burkholderia pseudomallei (strain 1106a) protein is Phosphate acyltransferase.